The sequence spans 986 residues: Bifunctional glutamine synthetase adenylyltransferase/adenylyl-removing enzyme (986 aa).

An adenylyl removase region spans residues 1 to 470 (MAAVAKRTVT…ERHYAALFET (470 aa)). The segment at 476-986 (AGIGNLVFTG…FDLLLRAGRP (511 aa)) is adenylyl transferase.

It belongs to the GlnE family. It depends on Mg(2+) as a cofactor.

The enzyme catalyses [glutamine synthetase]-O(4)-(5'-adenylyl)-L-tyrosine + phosphate = [glutamine synthetase]-L-tyrosine + ADP. It catalyses the reaction [glutamine synthetase]-L-tyrosine + ATP = [glutamine synthetase]-O(4)-(5'-adenylyl)-L-tyrosine + diphosphate. Involved in the regulation of glutamine synthetase GlnA, a key enzyme in the process to assimilate ammonia. When cellular nitrogen levels are high, the C-terminal adenylyl transferase (AT) inactivates GlnA by covalent transfer of an adenylyl group from ATP to specific tyrosine residue of GlnA, thus reducing its activity. Conversely, when nitrogen levels are low, the N-terminal adenylyl removase (AR) activates GlnA by removing the adenylyl group by phosphorolysis, increasing its activity. The regulatory region of GlnE binds the signal transduction protein PII (GlnB) which indicates the nitrogen status of the cell. The chain is Bifunctional glutamine synthetase adenylyltransferase/adenylyl-removing enzyme from Mesorhizobium japonicum (strain LMG 29417 / CECT 9101 / MAFF 303099) (Mesorhizobium loti (strain MAFF 303099)).